The following is a 373-amino-acid chain: Ubiquitin carboxyl-terminal hydrolase 50 (373 aa).

The USP domain occupies 44-364; sequence TGLRNLGNTC…TAYLLFYSCQ (321 aa). Cys-53 functions as the Nucleophile in the catalytic mechanism. Catalysis depends on His-322, which acts as the Proton acceptor.

It belongs to the peptidase C19 family.

It is found in the cytoplasm. Its subcellular location is the cytoskeleton. The protein resides in the microtubule organizing center. The protein localises to the centrosome. It localises to the nucleus. The catalysed reaction is Thiol-dependent hydrolysis of ester, thioester, amide, peptide and isopeptide bonds formed by the C-terminal Gly of ubiquitin (a 76-residue protein attached to proteins as an intracellular targeting signal).. Deubiquitinating enzyme that removes conjugated ubiquitin from specific proteins to regulate different cellular processes. Regulates the inflammasome signaling pathway by deubiquitinating 'Lys-63'-linked polyubiquitination of the PYCARD/ASC adapter protein. Regulates the ubiquitination and stability of the ACE2 protein. Acts as a negative regulator of the G2/M checkpoint pathway, by preventing serine/threonine kinase WEE1 degradation, thereby repressing entry into mitosis following activation of the G2/M DNA damage checkpoint. In Macaca fascicularis (Crab-eating macaque), this protein is Ubiquitin carboxyl-terminal hydrolase 50 (USP50).